Consider the following 208-residue polypeptide: GTP cyclohydrolase 1 (208 aa).

Zn(2+) is bound by residues C89, H92, and C163.

Belongs to the GTP cyclohydrolase I family. In terms of assembly, homomer.

It carries out the reaction GTP + H2O = 7,8-dihydroneopterin 3'-triphosphate + formate + H(+). It functions in the pathway cofactor biosynthesis; 7,8-dihydroneopterin triphosphate biosynthesis; 7,8-dihydroneopterin triphosphate from GTP: step 1/1. This Saccharolobus islandicus (strain Y.N.15.51 / Yellowstone #2) (Sulfolobus islandicus) protein is GTP cyclohydrolase 1.